Consider the following 1133-residue polypeptide: Envelopment polyprotein (1133 aa).

An N-terminal signal peptide occupies residues 1-17 (MWSLLLLAALVGQGFAL). Residues 18-484 (KNVFDMRIQC…PGFHGWATAA (467 aa)) are Lumenal-facing. 11 cysteine pairs are disulfide-bonded: Cys-27-Cys-149, Cys-61-Cys-155, Cys-107-Cys-126, Cys-131-Cys-136, Cys-173-Cys-183, Cys-208-Cys-245, Cys-232-Cys-349, Cys-374-Cys-433, Cys-378-Cys-387, Cys-403-Cys-422, and Cys-450-Cys-473. Asn-132 is a glycosylation site (N-linked (GlcNAc...) asparagine; by host). 2 N-linked (GlcNAc...) asparagine; by host glycosylation sites follow: Asn-233 and Asn-345. The N-linked (GlcNAc...) asparagine; by host glycan is linked to Asn-397. Residues 485–504 (LLITFCFGWVLIPACTLAIL) traverse the membrane as a helical segment. The Cytoplasmic portion of the chain corresponds to 505–626 (LVLKFFANIL…NLFRYKSRCY (122 aa)). A binding to the ribonucleoprotein region spans residues 514–531 (LHTSNQENRFKAILRKIK). 2 consecutive CCHC-type zinc fingers follow at residues 543-563 (CEICKYECETLKELKAHNLSC) and 568-589 (CPYCFTHCEPTETAIQAHYKVC). Binding to the ribonucleoprotein stretches follow at residues 586–603 (YKVCQATHRFREDLKKTV), 590–601 (QATHRFREDLKK), and 609–623 (GPGCYRTLNLFRYKS). Residues 609 to 632 (GPGCYRTLNLFRYKSRCYILTMWT) form the ITAM domain. A YxxL motif is present at residues 613–616 (YRTL). Residues 627 to 647 (ILTMWTLLLIIESILWAASAA) traverse the membrane as a helical segment. Residues 648-1104 (EIPLVPLWTD…WVMGIINGNW (457 aa)) lie on the Lumenal side of the membrane. Intrachain disulfides connect Cys-733/Cys-768, Cys-737/Cys-775, Cys-749/Cys-883, Cys-763/Cys-894, Cys-778/Cys-902, Cys-804/Cys-813, Cys-821/Cys-830, and Cys-861/Cys-865. Residues 755-775 (YEYENSWACNPPDCPGVGTGC) form a fusion loop region. Asn-926 is a glycosylation site (N-linked (GlcNAc...) asparagine; by host). Disulfide bonds link Cys-968/Cys-998, Cys-991/Cys-1043, Cys-1008/Cys-1013, Cys-1044/Cys-1049, and Cys-1083/Cys-1087. Residues 1105–1125 (VVLIVLCVLLLFSLILLSILC) traverse the membrane as a helical segment. The tract at residues 1120–1133 (LLSILCPVRKHKKS) is binding to the ribonucleoprotein. Residues 1126-1133 (PVRKHKKS) are Cytoplasmic-facing.

This sequence belongs to the hantavirus envelope glycoprotein family. Homodimer. Homotetramer; forms heterotetrameric Gn-Gc spikes in the pre-fusion conformation. Interacts (via C-terminus) with the nucleoprotein. Interacts with host TUFM; this interaction contributes to the virus-induced degradation of mitochondria by autophagy, which leads to degradation of host MAVS and inhibition of type I interferon (IFN) responses. Interacts with host MAP1LC3B; this interaction contributes to the virus-induced degradation of mitochondria by autophagy, which leads to degradation of host MAVS and inhibition of type I interferon (IFN) responses. As to quaternary structure, homodimer. Homotetramer; forms heterotetrameric Gn-Gc spikes in the pre-fusion conformation. Homotrimer; forms homotrimer in the post-fusion conformation at acidic pH. Interacts (via C-terminus) with the nucleoprotein. Post-translationally, envelope polyprotein precursor is quickly cleaved in vivo just after synthesis, presumably by host signal peptidase.

It is found in the virion membrane. It localises to the host cell surface. The protein resides in the host Golgi apparatus membrane. The protein localises to the host endoplasmic reticulum membrane. Its subcellular location is the host mitochondrion. Its function is as follows. Forms homotetramers with glycoprotein C at the surface of the virion. Attaches the virion to host cell receptors including integrin ITGAV/ITGB3. This attachment induces virion internalization predominantly through clathrin-dependent endocytosis. Mediates the assembly and budding of infectious virus particles through its interaction with the nucleocapsid protein and the viral genome. May dysregulate normal immune and endothelial cell responses through an ITAM motif. Translocates to mitochondria, binds to host TUFM and recruits MAP1LC3B. These interactions induce mitochondrial autophagy and therefore destruction of host MAVS leading to inhibition of type I interferon (IFN) responses. Concomitant breakdown of glycoprotein N is apparently prevented by the nucleoprotein that may inhibit Gn-stimulated autophagosome-lysosome fusion. Interacts with the viral genomic RNA. In terms of biological role, forms homotetramers with glycoprotein N at the surface of the virion. Attaches the virion to host cell receptors including integrin ITGAV/ITGB3. This attachment induces virion internalization predominantly through clathrin-dependent endocytosis. Class II fusion protein that promotes fusion of viral membrane with host endosomal membrane after endocytosis of the virion. This is Envelopment polyprotein (GP) from Homo sapiens (Human).